A 526-amino-acid chain; its full sequence is Probable fucosyltransferase 7 (526 aa).

Topologically, residues 1–4 are cytoplasmic; that stretch reads MKTK. A helical; Signal-anchor for type II membrane protein transmembrane segment spans residues 5 to 25; it reads LMITIFSCLLLWSMLLLLSFS. Topologically, residues 26-526 are lumenal; the sequence is NIFKHQLLGA…KLVDDTKNEL (501 aa). 3 N-linked (GlcNAc...) asparagine glycosylation sites follow: asparagine 211, asparagine 215, and asparagine 363.

It belongs to the glycosyltransferase 37 family. In terms of tissue distribution, expressed in roots, leaves, stems and seedlings.

Its subcellular location is the golgi apparatus. The protein resides in the golgi stack membrane. Its pathway is protein modification; protein glycosylation. May be involved in cell wall biosynthesis. May act as a fucosyltransferase. This chain is Probable fucosyltransferase 7 (FUT7), found in Arabidopsis thaliana (Mouse-ear cress).